The chain runs to 29 residues: Phospholemman-like protein (29 aa).

Belongs to the FXYD family. Post-translationally, phosphorylated by protein kinase C.

Its subcellular location is the membrane. Its function is as follows. Induces a hyperpolarization-activated chloride current when expressed in Xenopus oocytes. This is Phospholemman-like protein from Scyliorhinus canicula (Small-spotted catshark).